The primary structure comprises 539 residues: Membrane protein insertase YidC (539 aa).

The helical transmembrane segment at 7 to 27 (IIAIALSFVVLVGWSYLADHM) threads the bilayer. The segment at 32–64 (QPAPQAQQEETAPSASQAAPQSASQAAAPAPRA) is disordered. Helical transmembrane passes span 347–367 (YVGN…LVFW), 418–438 (GGCL…QALL), and 498–518 (IMMF…SGLV).

Belongs to the OXA1/ALB3/YidC family. Type 1 subfamily. In terms of assembly, interacts with the Sec translocase complex via SecD. Specifically interacts with transmembrane segments of nascent integral membrane proteins during membrane integration.

It localises to the cell inner membrane. Its function is as follows. Required for the insertion and/or proper folding and/or complex formation of integral membrane proteins into the membrane. Involved in integration of membrane proteins that insert both dependently and independently of the Sec translocase complex, as well as at least some lipoproteins. Aids folding of multispanning membrane proteins. The protein is Membrane protein insertase YidC of Nitratidesulfovibrio vulgaris (strain DSM 19637 / Miyazaki F) (Desulfovibrio vulgaris).